The sequence spans 333 residues: Complement C1q and tumor necrosis factor-related protein 9 (333 aa).

The N-terminal stretch at 1–19 (MRIWWLLLVMGACTRSVFS) is a signal peptide. Positions 22–194 (TCRQGHSGIP…GDRGEKGKVG (173 aa)) are disordered. Collagen-like domains lie at 24–82 (RQGH…DGRV), 84–130 (AKGI…KGEV), and 134–193 (GPEG…KGKV). 3 positions are modified to 4-hydroxyproline: Pro-31, Pro-34, and Pro-40. Residues 42–57 (RDGRDGAKGDKGDAGE) show a composition bias toward basic and acidic residues. Pro-58, Pro-61, and Pro-64 each carry 4-hydroxyproline. A compositionally biased stretch (basic and acidic residues) spans 67 to 88 (DGIRGEKGEPGADGRVEAKGIK). 5-hydroxylysine is present on Lys-73. Residue Lys-73 is glycosylated (O-linked (Gal...) hydroxylysine). 4-hydroxyproline is present on residues Pro-76 and Pro-115. Position 127 is a 5-hydroxylysine (Lys-127). O-linked (Gal...) hydroxylysine glycosylation occurs at Lys-127. 4-hydroxyproline occurs at positions 151, 160, and 175. A compositionally biased stretch (basic and acidic residues) spans 183 to 193 (WKGDRGEKGKV). One can recognise a C1q domain in the interval 197-333 (PLVPKSAFTV…FTGFLLFSSS (137 aa)).

As to quaternary structure, multimers (predominantly trimers). Interacts with ADIPOQ via the C1q domain to form a heterotrimeric complex. In terms of processing, the isomeric forms of the hydroxylated amino acids could not be determined in the mass-spectrometric methods reported in PubMed:18787108 but are assumed on the basis of their occurrence in collagen-like domains. Expressed predominantly in adipose tissue. Females express higher levels than males.

The protein resides in the secreted. In terms of biological role, probable adipokine. Activates AMPK, AKT, and p44/42 MAPK signaling pathways. This chain is Complement C1q and tumor necrosis factor-related protein 9 (C1qtnf9), found in Mus musculus (Mouse).